Here is a 75-residue protein sequence, read N- to C-terminus: Large ribosomal subunit protein bL31 (75 aa).

It belongs to the bacterial ribosomal protein bL31 family. Type A subfamily. In terms of assembly, part of the 50S ribosomal subunit.

Binds the 23S rRNA. This chain is Large ribosomal subunit protein bL31, found in Sphingopyxis alaskensis (strain DSM 13593 / LMG 18877 / RB2256) (Sphingomonas alaskensis).